The chain runs to 262 residues: uncharacterized protein (262 aa).

3 consecutive transmembrane segments (helical) span residues 4-24 (LIVFLSMLSSSVAGFFGRFLG), 28-48 (VSRFNLIIFLILLVFSICLFR), and 62-82 (CYLALVCQISLFLVLLRSHIL). A coiled-coil region spans residues 152 to 181 (EREARAQEHDRISAEVETITSACENLEAAM).

Its subcellular location is the mitochondrion membrane. This is an uncharacterized protein from Arabidopsis thaliana (Mouse-ear cress).